Here is a 238-residue protein sequence, read N- to C-terminus: Female-specific protein 800 (238 aa).

A compositionally biased stretch (low complexity) spans 35–50 (YSYHHTYNNNNQGNYQ). 2 disordered regions span residues 35-112 (YSYH…KGGS) and 166-204 (NKRK…SKSP). Residues 97–106 (RNDQIQSRGN) show a composition bias toward polar residues. The segment covering 171-187 (TKSEKNGRYIKKDHMNN) has biased composition (basic and acidic residues).

Its function is as follows. FS800 is likely to have some function in the production or maintenance of the schistosome egg. This chain is Female-specific protein 800, found in Schistosoma mansoni (Blood fluke).